The primary structure comprises 224 residues: UPF0758 protein Sde_3678 (224 aa).

The 123-residue stretch at 102 to 224 folds into the MPN domain; the sequence is SLTSTTAVKQ…AVSFAERGWI (123 aa). 3 residues coordinate Zn(2+): His-173, His-175, and Asp-186. Residues 173-186 carry the JAMM motif motif; it reads HNHPSGIAEPSEPD.

It belongs to the UPF0758 family.

The polypeptide is UPF0758 protein Sde_3678 (Saccharophagus degradans (strain 2-40 / ATCC 43961 / DSM 17024)).